The chain runs to 635 residues: Interferon-induced GTP-binding protein Mx2 (635 aa).

The Dynamin-type G domain maps to 31-304 (DLALPAIAVI…LVQHIEKSMP (274 aa)). The segment at 41 to 48 (GDQSSGKS) is G1 motif. 41–48 (GDQSSGKS) provides a ligand contact to GTP. The G2 motif stretch occupies residues 66-68 (VTR). Positions 142-145 (DLPG) are G3 motif. GTP-binding positions include 142-146 (DLPGI) and 211-214 (TKPD). The tract at residues 211–214 (TKPD) is G4 motif. The segment at 243 to 246 (KCRG) is G5 motif. The GED domain maps to 549–635 (LREMMLHLKS…MKAHNYLVEF (87 aa)).

It belongs to the TRAFAC class dynamin-like GTPase superfamily. Dynamin/Fzo/YdjA family.

The protein localises to the nucleus. It is found in the cytoplasm. Its function is as follows. Does not inhibit strain RB-1 of the fish pathogen, infectious hematopoietic necrosis virus (IHNV). This Oncorhynchus mykiss (Rainbow trout) protein is Interferon-induced GTP-binding protein Mx2.